Here is a 97-residue protein sequence, read N- to C-terminus: Defensin-like protein 246 (97 aa).

Residues 1–24 (MKFVAIFLVTCVLFSLFPSHLSQG) form the signal peptide. 4 disulfides stabilise this stretch: cysteine 39–cysteine 96, cysteine 50–cysteine 79, cysteine 58–cysteine 89, and cysteine 77–cysteine 91.

It belongs to the DEFL family. Flower buds and stems.

The protein localises to the secreted. In Arabidopsis thaliana (Mouse-ear cress), this protein is Defensin-like protein 246 (SCRL5).